We begin with the raw amino-acid sequence, 317 residues long: MSFSAETKDELARIEEGKRCCNLAELAALVRMDGTLQIANHSYALNVITESAPVARKVYRLAKNLLGLPVDIMVRRKLRLKKNNSYMVKIYPRTLEDLQQLGLLDEEGEILPGIPNVLVKKKCDRIAYLRGAFLAGGSINNPEGTYHLEIITNDPLHAEALSKLLNKFHLGAKVSMRKNWHVVYIKESEHIVEFLGFIGAHRALLEFENVRVLKDMRNQVNRLVNCETANLNKTVDAAVRQVENIQRVANTIGLQALPEPLREIAELRLEYPDASLKELGEMLVPKVGKSGVNHRMRKIDELAEKLEEQSKRVRKGG.

Positions 275-308 (SLKELGEMLVPKVGKSGVNHRMRKIDELAEKLEE) form a DNA-binding region, H-T-H motif.

The protein belongs to the WhiA family.

In terms of biological role, involved in cell division and chromosome segregation. This chain is Probable cell division protein WhiA, found in Desulfitobacterium hafniense (strain DSM 10664 / DCB-2).